A 306-amino-acid chain; its full sequence is Elongation factor Ts (306 aa).

The segment at 80–83 is involved in Mg(2+) ion dislocation from EF-Tu; that stretch reads TDFV.

This sequence belongs to the EF-Ts family.

The protein localises to the cytoplasm. Functionally, associates with the EF-Tu.GDP complex and induces the exchange of GDP to GTP. It remains bound to the aminoacyl-tRNA.EF-Tu.GTP complex up to the GTP hydrolysis stage on the ribosome. The polypeptide is Elongation factor Ts (Clostridium acetobutylicum (strain ATCC 824 / DSM 792 / JCM 1419 / IAM 19013 / LMG 5710 / NBRC 13948 / NRRL B-527 / VKM B-1787 / 2291 / W)).